The primary structure comprises 426 residues: Alpha/beta hydrolase pydG (426 aa).

The protein belongs to the AB hydrolase superfamily. Homodimer.

The protein operates within mycotoxin biosynthesis. Alpha/beta hydrolasee; part of the gene cluster that mediates the biosynthesis of pyrrocidines, fungal natural products containing a macrocyclic para-cyclophane connected to a decahydrofluorene ring system that show potent antibiotic activities toward Gram-negative bacteria. Within the pathway, pydG catalyzes the Knoevenagel condensation that affords the 3-pyrrolin-2-one ring, using as substrate the polyketide-tyrosyl acyl thioester product of pydA. The pathway begins with the PKS-NRPS pydA which, with the help of the trans-enoyl reductase pydC, synthesizes the polyketide-tyrosyl acyl thioester product which can be reductively off-loaded by the terminal reductase (R) domain in pydA. The alpha/beta hydrolase pydG is then required to catalyze the subsequent Knoevenagel condensation that affords the 3-pyrrolin-2-one ring, whereas the four proteins pydB, pydE, pydX and pydZ then function synergistically to form the cyclophane. PydB and the membrane-bound pydX and pydZ are lipid-binding proteins that can sequester and mold the pdyG product into the inverse S-shape. Binding of the medium chain reductase pydE to the complex would trigger the cascade oxidative cyclization. PydY is involved in the Diels-Alder cycloaddition that forms the decahydrofluorene core. Additional non-enzymatic hydroxylation yields pyrrocidine A2 which can be further reduced into pyrrocidine B by an endogenous reductase. This Acremonium sp protein is Alpha/beta hydrolase pydG.